Consider the following 257-residue polypeptide: Isoprenyl transferase (257 aa).

The active site involves Asp-34. Mg(2+) is bound at residue Asp-34. Substrate contacts are provided by residues 35–38 (GNGR), Trp-39, Arg-47, His-51, and 79–81 (STE). The Proton acceptor role is filled by Asn-82. Residues Trp-83, Arg-85, Arg-202, and 208–210 (RLS) contribute to the substrate site. Glu-221 contacts Mg(2+).

This sequence belongs to the UPP synthase family. As to quaternary structure, homodimer. The cofactor is Mg(2+).

Its function is as follows. Catalyzes the condensation of isopentenyl diphosphate (IPP) with allylic pyrophosphates generating different type of terpenoids. In Geobacillus kaustophilus (strain HTA426), this protein is Isoprenyl transferase.